Consider the following 490-residue polypeptide: ATP synthase subunit beta, chloroplastic (490 aa).

170 to 177 (GGAGVGKT) contributes to the ATP binding site.

The protein belongs to the ATPase alpha/beta chains family. F-type ATPases have 2 components, CF(1) - the catalytic core - and CF(0) - the membrane proton channel. CF(1) has five subunits: alpha(3), beta(3), gamma(1), delta(1), epsilon(1). CF(0) has four main subunits: a(1), b(1), b'(1) and c(9-12).

The protein localises to the plastid. It localises to the chloroplast thylakoid membrane. It catalyses the reaction ATP + H2O + 4 H(+)(in) = ADP + phosphate + 5 H(+)(out). In terms of biological role, produces ATP from ADP in the presence of a proton gradient across the membrane. The catalytic sites are hosted primarily by the beta subunits. The sequence is that of ATP synthase subunit beta, chloroplastic from Ipomoea setosa (Brazilian morning glory).